We begin with the raw amino-acid sequence, 186 residues long: Peptidyl-tRNA hydrolase (186 aa).

Tyr14 contributes to the tRNA binding site. Residue His19 is the Proton acceptor of the active site. Residues Tyr61, Asn63, and Asn107 each contribute to the tRNA site.

This sequence belongs to the PTH family. As to quaternary structure, monomer.

Its subcellular location is the cytoplasm. The catalysed reaction is an N-acyl-L-alpha-aminoacyl-tRNA + H2O = an N-acyl-L-amino acid + a tRNA + H(+). Hydrolyzes ribosome-free peptidyl-tRNAs (with 1 or more amino acids incorporated), which drop off the ribosome during protein synthesis, or as a result of ribosome stalling. Its function is as follows. Catalyzes the release of premature peptidyl moieties from peptidyl-tRNA molecules trapped in stalled 50S ribosomal subunits, and thus maintains levels of free tRNAs and 50S ribosomes. This Helicobacter pylori (strain G27) protein is Peptidyl-tRNA hydrolase.